A 77-amino-acid chain; its full sequence is Small ribosomal subunit protein bS21 (77 aa).

The protein belongs to the bacterial ribosomal protein bS21 family.

This is Small ribosomal subunit protein bS21 from Methylococcus capsulatus (strain ATCC 33009 / NCIMB 11132 / Bath).